A 524-amino-acid chain; its full sequence is Lycopene epsilon cyclase, chloroplastic (524 aa).

A chloroplast-targeting transit peptide spans 1–45; that stretch reads MECVGARNFAAMAVSTFPSWSCRRKFPVVKRYSYRNIRFGLCSVR. NAD(+) is bound at residue 111 to 139; it reads LVVIGCGPAGLALAAESAKLGLKVGLIGP. 2 consecutive transmembrane segments (helical) span residues 441–461 and 475–495; these read FFLFGLALIVQFDTEGIRSFF and FLGSTLTSGDLVLFALYMFVI.

It belongs to the lycopene cyclase family.

It localises to the plastid. It is found in the chloroplast membrane. It carries out the reaction a carotenoid psi-end group = a carotenoid epsilon-end group. The protein operates within carotenoid biosynthesis; alpha-zeacarotene biosynthesis. It functions in the pathway carotenoid biosynthesis; delta-carotene biosynthesis. Functionally, involved in carotenoid biosynthesis. Catalyzes the single epsilon-cyclization reaction which converts lycopene to delta-carotene and neurosporene to alpha-zeacarotene. Required for lutein biosynthesis. The protein is Lycopene epsilon cyclase, chloroplastic of Arabidopsis thaliana (Mouse-ear cress).